Consider the following 497-residue polypeptide: Cytochrome P450 3A18 (497 aa).

Cys-442 contacts heme.

It belongs to the cytochrome P450 family. Requires heme as cofactor.

Its subcellular location is the endoplasmic reticulum membrane. It localises to the microsome membrane. It carries out the reaction an organic molecule + reduced [NADPH--hemoprotein reductase] + O2 = an alcohol + oxidized [NADPH--hemoprotein reductase] + H2O + H(+). Functionally, catalyzes 16-beta- and 6-alpha-hydroxylations of testosterone. The chain is Cytochrome P450 3A18 (Cyp3a18) from Rattus norvegicus (Rat).